The chain runs to 1396 residues: DNA-directed RNA polymerase subunit beta' (1396 aa).

Residues C72, C74, C87, and C90 each contribute to the Zn(2+) site. Residues D463, D465, and D467 each contribute to the Mg(2+) site. Positions 814, 889, 896, and 899 each coordinate Zn(2+).

This sequence belongs to the RNA polymerase beta' chain family. The RNAP catalytic core consists of 2 alpha, 1 beta, 1 beta' and 1 omega subunit. When a sigma factor is associated with the core the holoenzyme is formed, which can initiate transcription. It depends on Mg(2+) as a cofactor. Zn(2+) is required as a cofactor.

It carries out the reaction RNA(n) + a ribonucleoside 5'-triphosphate = RNA(n+1) + diphosphate. Functionally, DNA-dependent RNA polymerase catalyzes the transcription of DNA into RNA using the four ribonucleoside triphosphates as substrates. This is DNA-directed RNA polymerase subunit beta' from Chlamydia trachomatis serovar A (strain ATCC VR-571B / DSM 19440 / HAR-13).